The primary structure comprises 388 residues: Chorismate synthase (388 aa).

Arginine 39 and arginine 45 together coordinate NADP(+). Residues 130-132 (RSS), 251-252 (NA), glycine 296, 311-315 (KPIPT), and arginine 337 each bind FMN.

This sequence belongs to the chorismate synthase family. Homotetramer. The cofactor is FMNH2.

The catalysed reaction is 5-O-(1-carboxyvinyl)-3-phosphoshikimate = chorismate + phosphate. It participates in metabolic intermediate biosynthesis; chorismate biosynthesis; chorismate from D-erythrose 4-phosphate and phosphoenolpyruvate: step 7/7. Its function is as follows. Catalyzes the anti-1,4-elimination of the C-3 phosphate and the C-6 proR hydrogen from 5-enolpyruvylshikimate-3-phosphate (EPSP) to yield chorismate, which is the branch point compound that serves as the starting substrate for the three terminal pathways of aromatic amino acid biosynthesis. This reaction introduces a second double bond into the aromatic ring system. The polypeptide is Chorismate synthase (Streptococcus pyogenes serotype M1).